The following is a 323-amino-acid chain: Lipoyl synthase (323 aa).

[4Fe-4S] cluster-binding residues include C61, C66, C72, C87, C91, C94, and S300. Positions 73-289 constitute a Radical SAM core domain; it reads WDKKHATFMI…ETVAYSKGFL (217 aa).

It belongs to the radical SAM superfamily. Lipoyl synthase family. Requires [4Fe-4S] cluster as cofactor.

It is found in the cytoplasm. The enzyme catalyses [[Fe-S] cluster scaffold protein carrying a second [4Fe-4S](2+) cluster] + N(6)-octanoyl-L-lysyl-[protein] + 2 oxidized [2Fe-2S]-[ferredoxin] + 2 S-adenosyl-L-methionine + 4 H(+) = [[Fe-S] cluster scaffold protein] + N(6)-[(R)-dihydrolipoyl]-L-lysyl-[protein] + 4 Fe(3+) + 2 hydrogen sulfide + 2 5'-deoxyadenosine + 2 L-methionine + 2 reduced [2Fe-2S]-[ferredoxin]. The protein operates within protein modification; protein lipoylation via endogenous pathway; protein N(6)-(lipoyl)lysine from octanoyl-[acyl-carrier-protein]: step 2/2. In terms of biological role, catalyzes the radical-mediated insertion of two sulfur atoms into the C-6 and C-8 positions of the octanoyl moiety bound to the lipoyl domains of lipoate-dependent enzymes, thereby converting the octanoylated domains into lipoylated derivatives. This Rhizobium etli (strain CIAT 652) protein is Lipoyl synthase.